A 212-amino-acid chain; its full sequence is Golgi SNAP receptor complex member 2 (212 aa).

Methionine 1 carries the N-acetylmethionine modification. The Cytoplasmic portion of the chain corresponds to 1–190; sequence MDPLFQQTHK…LIEKRAFQDK (190 aa). The stretch at 61–107 forms a coiled coil; the sequence is NKRQNARLRVDQLKYDVQHLQTALRNFQHRRHAREQQERQREELLSR. Positions 118-120 match the IxM motif; signal for cargo packaging into COPII-coated vesicles motif; sequence IPM. Residues 191–211 traverse the membrane as a helical; Anchor for type IV membrane protein segment; it reads YFMIGGMLLTCVVMFLVVQYL. Residue threonine 212 is a topological domain, vesicular.

The protein belongs to the GOSR2 family. As to quaternary structure, part of a unique SNARE complex composed of the Golgi SNAREs GOSR1, STX5 and YKT6. Interacts (via IxM motif) with SEC24C and SEC24D; mediates GOSR2 packaging into COPII-coated vesicles. Interacts with BET1.

It is found in the golgi apparatus. Its subcellular location is the cis-Golgi network membrane. It localises to the golgi apparatus membrane. The protein localises to the endoplasmic reticulum membrane. Involved in transport of proteins from the cis/medial-Golgi to the trans-Golgi network. The chain is Golgi SNAP receptor complex member 2 (GOSR2) from Homo sapiens (Human).